The chain runs to 670 residues: NADH-ubiquinone oxidoreductase chain 5 (670 aa).

The next 15 membrane-spanning stretches (helical) occupy residues 3-23 (LLIV…GRFL), 36-56 (VSFS…GASA), 76-96 (FLFD…SSLV), 113-133 (FMCY…GDNF), 136-156 (LFLG…FWFT), 178-198 (LALG…STIF), 218-238 (ITLI…QIGL), 250-270 (TPVS…FMIA), 283-303 (LIVI…TGIL), 319-339 (LGYM…FHLM), 340-360 (NHAF…HAMS), 375-395 (FPLT…FPFL), 425-445 (VSVL…FLVP), 461-481 (IPMA…GYLA), and 618-638 (SGSV…FVTF).

Belongs to the complex I subunit 5 family.

Its subcellular location is the mitochondrion inner membrane. The catalysed reaction is a ubiquinone + NADH + 5 H(+)(in) = a ubiquinol + NAD(+) + 4 H(+)(out). Its function is as follows. Core subunit of the mitochondrial membrane respiratory chain NADH dehydrogenase (Complex I) that is believed to belong to the minimal assembly required for catalysis. Complex I functions in the transfer of electrons from NADH to the respiratory chain. The immediate electron acceptor for the enzyme is believed to be ubiquinone. This chain is NADH-ubiquinone oxidoreductase chain 5 (ND5), found in Triticum aestivum (Wheat).